The sequence spans 403 residues: Tubby-like F-box protein 6 (403 aa).

Residues 50 to 105 (SCWAQLPPELLREVLVRIEESEVWWPSRRDVVACAGVCRSWRGITKEIVRVPEASG) enclose the F-box domain.

The protein belongs to the TUB family. In terms of tissue distribution, ubiquitous.

The chain is Tubby-like F-box protein 6 (TULP6) from Oryza sativa subsp. japonica (Rice).